We begin with the raw amino-acid sequence, 197 residues long: MLERLALTLAHQVKALNAEETESVEVLTFGFTIILHYLFTLLLVLAVGLLHGEIWLFLQIALSFTFMRVLTGGAHLDHSIGCTLLSVLFITAISWVPFANNYAWILYGISGGLLIWKYAPYYEAHQVVHTEHWERRKKRIAYILIVLFIILAMLMSTQGLVLGVLLQGVLLTPIGLKVTRQLNRFILKGGETNEENS.

4 consecutive transmembrane segments (helical) span residues 29–49, 79–99, 102–122, and 143–163; these read FGFT…AVGL, SIGC…VPFA, YAWI…APYY, and ILIV…LVLG.

This sequence belongs to the AgrB family.

The protein localises to the cell membrane. Its function is as follows. May be involved in the proteolytic processing of a quorum sensing system signal molecule precursor. The polypeptide is Putative AgrB-like protein (Halalkalibacterium halodurans (strain ATCC BAA-125 / DSM 18197 / FERM 7344 / JCM 9153 / C-125) (Bacillus halodurans)).